Here is a 311-residue protein sequence, read N- to C-terminus: N-acetylmuramic acid 6-phosphate etherase (311 aa).

An SIS domain is found at 64-227; the sequence is IYQRLIDNGR…SSGVMIKLGK (164 aa). Catalysis depends on E92, which acts as the Proton donor. E123 is a catalytic residue.

Belongs to the GCKR-like family. MurNAc-6-P etherase subfamily. As to quaternary structure, homodimer.

It carries out the reaction N-acetyl-D-muramate 6-phosphate + H2O = N-acetyl-D-glucosamine 6-phosphate + (R)-lactate. Its pathway is amino-sugar metabolism; N-acetylmuramate degradation. In terms of biological role, specifically catalyzes the cleavage of the D-lactyl ether substituent of MurNAc 6-phosphate, producing GlcNAc 6-phosphate and D-lactate. This chain is N-acetylmuramic acid 6-phosphate etherase, found in Prochlorococcus marinus (strain SARG / CCMP1375 / SS120).